The primary structure comprises 187 residues: Ribosome-recycling factor (187 aa).

This sequence belongs to the RRF family.

The protein resides in the cytoplasm. In terms of biological role, responsible for the release of ribosomes from messenger RNA at the termination of protein biosynthesis. May increase the efficiency of translation by recycling ribosomes from one round of translation to another. In Methylorubrum extorquens (strain CM4 / NCIMB 13688) (Methylobacterium extorquens), this protein is Ribosome-recycling factor.